Here is a 411-residue protein sequence, read N- to C-terminus: Tyrosine--tRNA ligase (411 aa).

Tyrosine 36 lines the L-tyrosine pocket. A 'HIGH' region motif is present at residues 41-50; that stretch reads PTADSLHVGH. Residues tyrosine 172 and glutamine 176 each coordinate L-tyrosine. Residues 232 to 236 carry the 'KMSKS' region motif; it reads KMGKT. Lysine 235 contributes to the ATP binding site. One can recognise an S4 RNA-binding domain in the interval 344–409; the sequence is YSIANILVVT…GKKNHIKVII (66 aa).

It belongs to the class-I aminoacyl-tRNA synthetase family. TyrS type 1 subfamily. As to quaternary structure, homodimer.

The protein resides in the cytoplasm. The enzyme catalyses tRNA(Tyr) + L-tyrosine + ATP = L-tyrosyl-tRNA(Tyr) + AMP + diphosphate + H(+). Catalyzes the attachment of tyrosine to tRNA(Tyr) in a two-step reaction: tyrosine is first activated by ATP to form Tyr-AMP and then transferred to the acceptor end of tRNA(Tyr). This is Tyrosine--tRNA ligase from Malacoplasma penetrans (strain HF-2) (Mycoplasma penetrans).